Reading from the N-terminus, the 248-residue chain is Putative insertion sequence ATP-binding protein y4uH (248 aa).

106 to 113 (GPTGIGKS) contacts ATP.

The protein belongs to the IS21/IS1162 putative ATP-binding protein family.

This chain is Putative insertion sequence ATP-binding protein y4uH, found in Sinorhizobium fredii (strain NBRC 101917 / NGR234).